The following is a 192-amino-acid chain: Probable thymidylate kinase (192 aa).

7–14 (GIDGAGKS) lines the ATP pocket.

It belongs to the thymidylate kinase family.

It carries out the reaction dTMP + ATP = dTDP + ADP. The chain is Probable thymidylate kinase from Methanobrevibacter smithii (strain ATCC 35061 / DSM 861 / OCM 144 / PS).